We begin with the raw amino-acid sequence, 464 residues long: Na(+)/H(+) antiporter NhaA (464 aa).

The next 12 membrane-spanning stretches (helical) occupy residues 37 to 57, 82 to 102, 118 to 138, 145 to 165, 176 to 196, 200 to 220, 226 to 246, 248 to 268, 321 to 341, 360 to 380, 396 to 416, and 430 to 450; these read GSGILLVFLTIVALVFANTSC, IHYWINDALMTLFFLMVGLEI, VLPIFAALGGMIVPALIYFSF, VSGWGIPMATDIAFAIAILLL, AVLVALAIVDDLGAVIVIAIF, NLAWSPLIAAFLCFAVLLLLN, ALWAYIAIGSLMWVFMLFSGV, ATVAGVLTALATPMNAVYSPT, ILNTPVYFLIVPLFVLFNAGV, VFFGLVFGKLIGVVSAIMICV, VLGIGMLAGIGFTMSIFVSEL, and ITILAASLTAATLGYCWLRFI.

Belongs to the NhaA Na(+)/H(+) (TC 2.A.33) antiporter family.

The protein localises to the cell inner membrane. The enzyme catalyses Na(+)(in) + 2 H(+)(out) = Na(+)(out) + 2 H(+)(in). Functionally, na(+)/H(+) antiporter that extrudes sodium in exchange for external protons. In Dichelobacter nodosus (strain VCS1703A), this protein is Na(+)/H(+) antiporter NhaA.